Here is a 245-residue protein sequence, read N- to C-terminus: tRNA pseudouridine synthase A (245 aa).

Residue Asp-52 is the Nucleophile of the active site. Tyr-111 is a binding site for substrate.

This sequence belongs to the tRNA pseudouridine synthase TruA family. In terms of assembly, homodimer.

The enzyme catalyses uridine(38/39/40) in tRNA = pseudouridine(38/39/40) in tRNA. Formation of pseudouridine at positions 38, 39 and 40 in the anticodon stem and loop of transfer RNAs. The polypeptide is tRNA pseudouridine synthase A (Rickettsia bellii (strain RML369-C)).